We begin with the raw amino-acid sequence, 437 residues long: GTPase Der (437 aa).

EngA-type G domains follow at residues 4 to 168 (NIVA…PEKP) and 178 to 353 (PRFA…ENRK). Residues 10–17 (GRPNVGKS), 57–61 (DTGGY), 120–123 (NKVD), 184–191 (GRPNAGKS), 231–235 (DTAGI), and 296–299 (NKWD) each bind GTP. A KH-like domain is found at 354–437 (QRISTSKFNE…VPIDIYIREK (84 aa)).

It belongs to the TRAFAC class TrmE-Era-EngA-EngB-Septin-like GTPase superfamily. EngA (Der) GTPase family. As to quaternary structure, associates with the 50S ribosomal subunit.

GTPase that plays an essential role in the late steps of ribosome biogenesis. In Flavobacterium johnsoniae (strain ATCC 17061 / DSM 2064 / JCM 8514 / BCRC 14874 / CCUG 350202 / NBRC 14942 / NCIMB 11054 / UW101) (Cytophaga johnsonae), this protein is GTPase Der.